Consider the following 205-residue polypeptide: Adenylyl-sulfate kinase (205 aa).

An ATP-binding site is contributed by 31–38 (GLSGSGKS). The active-site Phosphoserine intermediate is the Ser-105.

This sequence belongs to the APS kinase family.

It catalyses the reaction adenosine 5'-phosphosulfate + ATP = 3'-phosphoadenylyl sulfate + ADP + H(+). Its pathway is sulfur metabolism; hydrogen sulfide biosynthesis; sulfite from sulfate: step 2/3. Its function is as follows. Catalyzes the synthesis of activated sulfate. In Shewanella pealeana (strain ATCC 700345 / ANG-SQ1), this protein is Adenylyl-sulfate kinase.